A 58-amino-acid polypeptide reads, in one-letter code: Small ribosomal subunit protein bS21 (58 aa).

This sequence belongs to the bacterial ribosomal protein bS21 family.

This Prochlorococcus marinus (strain MIT 9515) protein is Small ribosomal subunit protein bS21.